A 250-amino-acid chain; its full sequence is Glutamate racemase (250 aa).

Substrate contacts are provided by residues 7–8 (DS) and 39–40 (YG). Cys-70 functions as the Proton donor/acceptor in the catalytic mechanism. Residue 71 to 72 (NT) coordinates substrate. Catalysis depends on Cys-180, which acts as the Proton donor/acceptor. Residue 181–182 (TH) coordinates substrate.

This sequence belongs to the aspartate/glutamate racemases family.

The enzyme catalyses L-glutamate = D-glutamate. Its pathway is cell wall biogenesis; peptidoglycan biosynthesis. Provides the (R)-glutamate required for cell wall biosynthesis. This Campylobacter jejuni subsp. jejuni serotype O:2 (strain ATCC 700819 / NCTC 11168) protein is Glutamate racemase.